A 393-amino-acid polypeptide reads, in one-letter code: Probable acetyl-CoA acetyltransferase (393 aa).

A propeptide (removed; alternate) is located at residue T2. C88 acts as the Acyl-thioester intermediate in catalysis. Residues H349 and C379 each act as proton acceptor in the active site.

This sequence belongs to the thiolase-like superfamily. Thiolase family.

It catalyses the reaction 2 acetyl-CoA = acetoacetyl-CoA + CoA. This chain is Probable acetyl-CoA acetyltransferase (fadA4), found in Mycobacterium tuberculosis (strain ATCC 25618 / H37Rv).